Here is a 426-residue protein sequence, read N- to C-terminus: MQVKLKVLLIGSGGRESAIAFYLRKSVLLSELKVFPGNGGFPDQELLPPDSFQVLDKNSVQSFLKQNPFDLIVVGPEDPLVAGFADWAAELNIPVFGPDSFCAQVEGSKDFAKSLMTEAKIPTAEYKTFSEYSDSLKYLESKSIPIVIKADGLAAGKGVTVATSKEMAQTALKEIFKDKKFGSSGNQVVIEEFMEGQEASIFAISDGDSYFLLPAAQDHKRAFDGDQGPNTGGMGAYCPAPVISESILQKVKEQIFDPMFDLFRKKGHPYRGLLYAGLMISPNGEPKVVEFNCRFGDPETQCVLAMLDGDLLELLYRASTGKIKGVQAAVKKGAAVVVVLAAQGYPDFYEKNIPLNLPETSGQNVHLFHAGTLKKDGKVFSSGGRILGIVAQGADLKSSVDQAYSFLEKIQAPKTFYRKDIGYRAL.

Residues 113 to 320 enclose the ATP-grasp domain; that stretch reads KSLMTEAKIP…LLELLYRAST (208 aa). An ATP-binding site is contributed by 139 to 200; that stretch reads LESKSIPIVI…EEFMEGQEAS (62 aa). Mg(2+) contacts are provided by glutamate 290 and asparagine 292.

This sequence belongs to the GARS family. Mg(2+) is required as a cofactor. It depends on Mn(2+) as a cofactor.

The catalysed reaction is 5-phospho-beta-D-ribosylamine + glycine + ATP = N(1)-(5-phospho-beta-D-ribosyl)glycinamide + ADP + phosphate + H(+). Its pathway is purine metabolism; IMP biosynthesis via de novo pathway; N(1)-(5-phospho-D-ribosyl)glycinamide from 5-phospho-alpha-D-ribose 1-diphosphate: step 2/2. This is Phosphoribosylamine--glycine ligase from Leptospira interrogans serogroup Icterohaemorrhagiae serovar Lai (strain 56601).